Consider the following 148-residue polypeptide: Flagellar assembly factor FliW (148 aa).

Belongs to the FliW family. Interacts with translational regulator CsrA and flagellin(s).

It is found in the cytoplasm. Functionally, acts as an anti-CsrA protein, binds CsrA and prevents it from repressing translation of its target genes, one of which is flagellin. Binds to flagellin and participates in the assembly of the flagellum. This chain is Flagellar assembly factor FliW, found in Ruminiclostridium cellulolyticum (strain ATCC 35319 / DSM 5812 / JCM 6584 / H10) (Clostridium cellulolyticum).